We begin with the raw amino-acid sequence, 180 residues long: Oligoribonuclease (180 aa).

One can recognise an Exonuclease domain in the interval 7–170 (LIWIDLEMTG…DDIRESIAEL (164 aa)). Residue Y128 is part of the active site.

This sequence belongs to the oligoribonuclease family.

It is found in the cytoplasm. 3'-to-5' exoribonuclease specific for small oligoribonucleotides. This is Oligoribonuclease from Pseudomonas fluorescens (strain ATCC BAA-477 / NRRL B-23932 / Pf-5).